The chain runs to 82 residues: DNA-directed RNA polymerase subunit Rpo5 (82 aa).

The protein belongs to the archaeal Rpo5/eukaryotic RPB5 RNA polymerase subunit family. In terms of assembly, part of the RNA polymerase complex.

It is found in the cytoplasm. The enzyme catalyses RNA(n) + a ribonucleoside 5'-triphosphate = RNA(n+1) + diphosphate. Functionally, DNA-dependent RNA polymerase (RNAP) catalyzes the transcription of DNA into RNA using the four ribonucleoside triphosphates as substrates. In Pyrococcus horikoshii (strain ATCC 700860 / DSM 12428 / JCM 9974 / NBRC 100139 / OT-3), this protein is DNA-directed RNA polymerase subunit Rpo5.